The primary structure comprises 94 residues: Protein S100-A1 (94 aa).

2 EF-hand domains span residues 13 to 48 (INVF…FLDV) and 50 to 85 (KDAD…LTVA). Positions 28, 33, 63, 65, 67, 69, and 74 each coordinate Ca(2+). Cysteine 86 is subject to S-nitrosocysteine.

This sequence belongs to the S-100 family. In terms of assembly, dimer of either two alpha chains, or two beta chains, or one alpha and one beta chain. Also forms heterodimers with S100P. Interacts with AGER. Interacts with CAPZA1. Interacts with FKBP4. Interacts with RYR1 and RYR2. Interacts with CACYBP in a calcium-dependent manner. Interacts with PPP5C (via TPR repeats); the interaction is calcium-dependent and modulates PPP5C activity. Interacts with ATP2A2 and PLN in a Ca(2+)-dependent manner. Interacts with mitochondrial F1-ATPase subunits ATP5F1A and ATP5F1B; these interactions increase F1-ATPase activity. Glutathionylated; glutathionylation increases affinity to calcium about 10-fold. Although predominant among the water-soluble brain proteins, S100 is also found in a variety of other tissues.

It localises to the cytoplasm. It is found in the sarcoplasmic reticulum. The protein resides in the mitochondrion. Functionally, small calcium binding protein that plays important roles in several biological processes such as Ca(2+) homeostasis, chondrocyte biology and cardiomyocyte regulation. In response to an increase in intracellular Ca(2+) levels, binds calcium which triggers conformational changes. These changes allow interactions with specific target proteins and modulate their activity. Regulates a network in cardiomyocytes controlling sarcoplasmic reticulum Ca(2+) cycling and mitochondrial function through interaction with the ryanodine receptors RYR1 and RYR2, sarcoplasmic reticulum Ca(2+)-ATPase/ATP2A2 and mitochondrial F1-ATPase. Facilitates diastolic Ca(2+) dissociation and myofilament mechanics in order to improve relaxation during diastole. The polypeptide is Protein S100-A1 (S100a1) (Rattus norvegicus (Rat)).